The sequence spans 505 residues: Glycerol kinase (505 aa).

Thr12 provides a ligand contact to ADP. ATP is bound by residues Thr12, Thr13, and Ser14. A sn-glycerol 3-phosphate-binding site is contributed by Thr12. Arg16 is an ADP binding site. Arg82, Glu83, Tyr134, and Asp249 together coordinate sn-glycerol 3-phosphate. The glycerol site is built by Arg82, Glu83, Tyr134, Asp249, and Gln250. 2 residues coordinate ADP: Thr271 and Gly315. 4 residues coordinate ATP: Thr271, Gly315, Gln319, and Gly416. Positions 416 and 420 each coordinate ADP.

Belongs to the FGGY kinase family.

The catalysed reaction is glycerol + ATP = sn-glycerol 3-phosphate + ADP + H(+). The protein operates within polyol metabolism; glycerol degradation via glycerol kinase pathway; sn-glycerol 3-phosphate from glycerol: step 1/1. Its activity is regulated as follows. Inhibited by fructose 1,6-bisphosphate (FBP). Its function is as follows. Key enzyme in the regulation of glycerol uptake and metabolism. Catalyzes the phosphorylation of glycerol to yield sn-glycerol 3-phosphate. This chain is Glycerol kinase, found in Mycolicibacterium vanbaalenii (strain DSM 7251 / JCM 13017 / BCRC 16820 / KCTC 9966 / NRRL B-24157 / PYR-1) (Mycobacterium vanbaalenii).